A 604-amino-acid polypeptide reads, in one-letter code: Polycomb group protein EMF2B (604 aa).

The C2H2-type zinc-finger motif lies at 310–331 (CPFCLVPCGSFKGLGCHLNASH). Residues 396–440 (PHIVDSGSPEDAQAGSEDDYVQRENGSSVAHASVDPANSLHGSNL) form a disordered region. The interval 454–589 (LSVERADPRN…DARAMNACNT (136 aa)) is VEFS-box.

The protein belongs to the VEFS (VRN2-EMF2-FIS2-SU(Z)12) family. In terms of assembly, component of the polycomb repressive complex 2 (PRC2), composed of the core PRC2 components FIE2, EZ1 and CLF. PRC2 methylates 'Lys-27' residues of histone H3 (H3K27me3), leading to transcriptional repression of the affected target gene. As to expression, widely expressed.

Functionally, polycomb group (PcG) protein. PcG proteins act by forming multiprotein complexes, which are required to maintain the transcriptionally repressive state of homeotic genes throughout development. PcG proteins are not required to initiate repression, but to maintain it during later stages of development. They act via the methylation of histones, rendering chromatin heritably changed in its expressibility. Polycomb group (PcG) protein involved in the repression of flowering under long day (LD) conditions. Regulates floret development. This Oryza sativa subsp. japonica (Rice) protein is Polycomb group protein EMF2B.